Consider the following 190-residue polypeptide: Shikimate kinase (190 aa).

Residue 13–18 (GAGKTT) coordinates ATP. Position 17 (T17) interacts with Mg(2+). 3 residues coordinate substrate: D35, R59, and G81. ATP is bound at residue R119. R138 is a binding site for substrate.

This sequence belongs to the shikimate kinase family. As to quaternary structure, monomer. It depends on Mg(2+) as a cofactor.

It is found in the cytoplasm. The enzyme catalyses shikimate + ATP = 3-phosphoshikimate + ADP + H(+). It functions in the pathway metabolic intermediate biosynthesis; chorismate biosynthesis; chorismate from D-erythrose 4-phosphate and phosphoenolpyruvate: step 5/7. Its function is as follows. Catalyzes the specific phosphorylation of the 3-hydroxyl group of shikimic acid using ATP as a cosubstrate. The protein is Shikimate kinase of Ralstonia nicotianae (strain ATCC BAA-1114 / GMI1000) (Ralstonia solanacearum).